Consider the following 96-residue polypeptide: Co-chaperonin GroES (96 aa).

This sequence belongs to the GroES chaperonin family. Heptamer of 7 subunits arranged in a ring. Interacts with the chaperonin GroEL.

Its subcellular location is the cytoplasm. Together with the chaperonin GroEL, plays an essential role in assisting protein folding. The GroEL-GroES system forms a nano-cage that allows encapsulation of the non-native substrate proteins and provides a physical environment optimized to promote and accelerate protein folding. GroES binds to the apical surface of the GroEL ring, thereby capping the opening of the GroEL channel. The polypeptide is Co-chaperonin GroES (Neisseria meningitidis serogroup A / serotype 4A (strain DSM 15465 / Z2491)).